Consider the following 96-residue polypeptide: Transcription and mRNA export factor SUS1 (96 aa).

Residue K68 forms a Glycyl lysine isopeptide (Lys-Gly) (interchain with G-Cter in ubiquitin) linkage.

It belongs to the ENY2 family. Component of the nuclear pore complex (NPC)-associated TREX-2 complex (transcription and export complex 2), composed of at least SUS1, SAC3, THP1, SEM1, and CDC31. TREX-2 contains 2 SUS1 chains. The TREX-2 complex interacts with the nucleoporin NUP1. Component of the 1.8 MDa SAGA transcription coactivator-HAT complex. SAGA is built of 5 distinct domains with specialized functions. Within the SAGA complex, SUS1, SGF11, SGF73 and UBP8 form an additional subcomplex of SAGA called the DUB module (deubiquitination module). Interacts directly with THP1, SAC3, SGF11, and with the RNA polymerase II.

It is found in the nucleus. The protein resides in the nucleoplasm. It localises to the cytoplasm. The protein localises to the P-body. Functionally, involved in mRNA export coupled transcription activation by association with both the TREX-2 and the SAGA complexes. At the promoters, SAGA is required for recruitment of the basal transcription machinery. It influences RNA polymerase II transcriptional activity through different activities such as TBP interaction and promoter selectivity, interaction with transcription activators, and chromatin modification through histone acetylation and deubiquitination. Within the SAGA complex, participates in a subcomplex required for deubiquitination of H2B and for the maintenance of steady-state H3 methylation levels. The TREX-2 complex functions in docking export-competent ribonucleoprotein particles (mRNPs) to the nuclear entrance of the nuclear pore complex (nuclear basket). TREX-2 participates in mRNA export and accurate chromatin positioning in the nucleus by tethering genes to the nuclear periphery. May also be involved in cytoplasmic mRNA decay by interaction with components of P-bodies. The protein is Transcription and mRNA export factor SUS1 of Saccharomyces cerevisiae (strain RM11-1a) (Baker's yeast).